Here is a 101-residue protein sequence, read N- to C-terminus: Small ribosomal subunit protein uS17 (101 aa).

The protein belongs to the universal ribosomal protein uS17 family. Part of the 30S ribosomal subunit.

In terms of biological role, one of the primary rRNA binding proteins, it binds specifically to the 5'-end of 16S ribosomal RNA. This is Small ribosomal subunit protein uS17 from Koribacter versatilis (strain Ellin345).